Here is a 249-residue protein sequence, read N- to C-terminus: MADS-box transcription factor 18 (249 aa).

The region spanning 1 to 61 (MGRGPVQLRR…GKLYEFSSHS (61 aa)) is the MADS-box domain. Residues 88–179 (QENWGDEYGI…KLMETEKEKN (92 aa)) form the K-box domain. Residues 184 to 249 (NTNREEQNGA…PPWMLRTSHT (66 aa)) are disordered. The span at 210 to 236 (PTTNNSQSQPRGSGESEAQPSPAQAGN) shows a compositional bias: polar residues.

Widely expressed. Transcripts accumulate to higher levels in organs that retain meristematic characteristics: in the apical meristem and in the meristematic leaf primordia formed on its flank; in the developing panicle at the early stage of rachis-branch primordia differentiation; in the procambium of the rachis branches and in all floral organ primordia.

The protein localises to the nucleus. Functionally, probable transcription factor. The chain is MADS-box transcription factor 18 (MADS18) from Oryza sativa subsp. indica (Rice).